Here is a 134-residue protein sequence, read N- to C-terminus: Small ribosomal subunit protein uS11 (134 aa).

2 disordered regions span residues 1 to 22 (MPPK…KNVA) and 114 to 134 (SIQD…RRRV). Positions 9–22 (AAKKVRRKEKKNVA) are enriched in basic residues.

This sequence belongs to the universal ribosomal protein uS11 family. In terms of assembly, part of the 30S ribosomal subunit. Interacts with proteins S7 and S18. Binds to IF-3.

Located on the platform of the 30S subunit, it bridges several disparate RNA helices of the 16S rRNA. Forms part of the Shine-Dalgarno cleft in the 70S ribosome. The polypeptide is Small ribosomal subunit protein uS11 (Streptomyces avermitilis (strain ATCC 31267 / DSM 46492 / JCM 5070 / NBRC 14893 / NCIMB 12804 / NRRL 8165 / MA-4680)).